Here is a 220-residue protein sequence, read N- to C-terminus: Deoxyribose-phosphate aldolase 2 (220 aa).

Catalysis depends on Asp-89, which acts as the Proton donor/acceptor. The active-site Schiff-base intermediate with acetaldehyde is Lys-151. The Proton donor/acceptor role is filled by Lys-180.

It belongs to the DeoC/FbaB aldolase family. DeoC type 1 subfamily.

The protein resides in the cytoplasm. The catalysed reaction is 2-deoxy-D-ribose 5-phosphate = D-glyceraldehyde 3-phosphate + acetaldehyde. It functions in the pathway carbohydrate degradation; 2-deoxy-D-ribose 1-phosphate degradation; D-glyceraldehyde 3-phosphate and acetaldehyde from 2-deoxy-alpha-D-ribose 1-phosphate: step 2/2. Functionally, catalyzes a reversible aldol reaction between acetaldehyde and D-glyceraldehyde 3-phosphate to generate 2-deoxy-D-ribose 5-phosphate. The polypeptide is Deoxyribose-phosphate aldolase 2 (Staphylococcus aureus (strain N315)).